A 115-amino-acid chain; its full sequence is Evasin P1183 (115 aa).

The first 25 residues, 1–25, serve as a signal peptide directing secretion; sequence MTRNWSFRVIFVSAMWCALLKFATL. Cystine bridges form between C38–C58, C54–C94, C70–C99, and C89–C108. N-linked (GlcNAc...) asparagine glycosylation is found at N45, N72, and N103.

Its subcellular location is the secreted. Functionally, salivary chemokine-binding protein which binds to host chemokine CCL2. This is Evasin P1183 from Amblyomma triste (Neotropical tick).